A 38-amino-acid polypeptide reads, in one-letter code: Large ribosomal subunit protein bL36 (38 aa).

The protein belongs to the bacterial ribosomal protein bL36 family.

The sequence is that of Large ribosomal subunit protein bL36 from Wigglesworthia glossinidia brevipalpis.